The sequence spans 722 residues: Bifunctional UDP-N-acetylglucosamine 2-epimerase/N-acetylmannosamine kinase (722 aa).

UDP is bound by residues arginine 19, serine 23, arginine 113, histidine 220, and asparagine 253. Positions 259, 271, 280, and 281 each coordinate CMP-N-acetyl-beta-neuraminate. Positions 282, 301, 302, 307, and 321 each coordinate UDP. An N-acetylmannosamine kinase region spans residues 406–722; the sequence is TLSALAVDLG…VLDYTTRRIH (317 aa). Position 413 (aspartate 413) interacts with Mg(2+). An an N-acyl-D-mannosamine 6-phosphate-binding site is contributed by glycine 416. Residues threonine 417, asparagine 418, and arginine 420 each coordinate ADP. An N-acyl-D-mannosamine 6-phosphate contacts are provided by glycine 476, arginine 477, threonine 489, asparagine 516, aspartate 517, and glycine 545. Residues glycine 476, arginine 477, threonine 489, asparagine 516, and aspartate 517 each contribute to the an N-acyl-D-mannosamine site. Aspartate 517 is an active-site residue. An N-acyl-D-mannosamine contacts are provided by glutamate 566 and histidine 569. Histidine 569 is a binding site for an N-acyl-D-mannosamine 6-phosphate. 4 residues coordinate Zn(2+): histidine 569, cysteine 579, cysteine 581, and cysteine 586. Glutamate 588 provides a ligand contact to an N-acyl-D-mannosamine 6-phosphate. Residue glutamate 588 participates in an N-acyl-D-mannosamine binding.

This sequence in the N-terminal section; belongs to the UDP-N-acetylglucosamine 2-epimerase family. In the C-terminal section; belongs to the ROK (NagC/XylR) family. Homodimer. Homotetramer. Homohexamer. The hexameric form exhibits both enzyme activities, whereas the dimeric form only catalyzes the phosphorylation of N-acyl-D-mannosamine. Post-translationally, phosphorylated. Phosphorylation by PKC activates the UDP-N-acetylglucosamine 2-epimerase activity. As to expression, widely expressed. Highest expression in liver. Also found at high levels in lung, brain and kidney.

The protein localises to the cytoplasm. The protein resides in the cytosol. It catalyses the reaction UDP-N-acetyl-alpha-D-glucosamine + H2O = aldehydo-N-acetyl-D-mannosamine + UDP + H(+). It carries out the reaction an N-acyl-D-mannosamine + ATP = an N-acyl-D-mannosamine 6-phosphate + ADP + H(+). The protein operates within amino-sugar metabolism; N-acetylneuraminate biosynthesis. The UDP-N-acetylglucosamine 2-epimerase activity, in contrast to the N-acetylmannosamine kinase activity, exhibits allosteric regulation by cytidine monophosphate-N-acetylneuraminic acid (CMP-Neu5Ac), the end product of neuraminic acid biosynthesis. Moreover, the activity is contingent upon the oligomeric state of the enzyme. The monomeric form is inactive, while the dimeric form selectively catalyzes the phosphorylation of N-acetylmannosamine. The hexameric form, on the other hand, demonstrates full proficiency in both enzyme activities. Furthermore, the UDP-N-acetylglucosamine 2-epimerase activity is increased by PKC-mediated phosphorylation. Functionally, bifunctional enzyme that possesses both UDP-N-acetylglucosamine 2-epimerase and N-acetylmannosamine kinase activities, and serves as the initiator of the biosynthetic pathway leading to the production of N-acetylneuraminic acid (NeuAc), a critical precursor in the synthesis of sialic acids. By catalyzing this pivotal and rate-limiting step in sialic acid biosynthesis, this enzyme assumes a pivotal role in governing the regulation of cell surface sialylation, playing a role in embryonic angiogenesis. Sialic acids represent a category of negatively charged sugars that reside on the surface of cells as terminal components of glycoconjugates and mediate important functions in various cellular processes, including cell adhesion, signal transduction, and cellular recognition. The protein is Bifunctional UDP-N-acetylglucosamine 2-epimerase/N-acetylmannosamine kinase of Mus musculus (Mouse).